The primary structure comprises 359 residues: WAT1-related protein At4g28040 (359 aa).

Transmembrane regions (helical) follow at residues 10–30 (LALV…KAAF), 37–57 (TVFV…ISFI), 66–86 (PSLG…GVTV), 103–123 (ACAM…IVGF), 133–153 (SVAK…MTFL), 170–190 (WLLG…WLIL), 204–224 (TSAC…LALG), 240–260 (SCCI…AWIV), 266–286 (VFSA…GALY), and 292–312 (YLGS…VLWG). The region spanning 18–131 (TSAGVALFTK…GFESIKRRSM (114 aa)) is the EamA 1 domain. Residues 199-310 (PDHLYTSACT…AIILGLYIVL (112 aa)) form the EamA 2 domain.

Belongs to the drug/metabolite transporter (DMT) superfamily. Plant drug/metabolite exporter (P-DME) (TC 2.A.7.4) family.

The protein localises to the membrane. This chain is WAT1-related protein At4g28040, found in Arabidopsis thaliana (Mouse-ear cress).